A 397-amino-acid chain; its full sequence is Cytochrome b (397 aa).

A run of 4 helical transmembrane segments spans residues 38 to 58 (FGSL…FLAM), 82 to 104 (WLLR…LHIF), 119 to 139 (VWCL…IGYV), and 185 to 205 (FFSL…LHLA). Residues H88 and H102 each coordinate heme b. Heme b-binding residues include H189 and H203. H208 contributes to the a ubiquinone binding site. The next 4 membrane-spanning stretches (helical) occupy residues 231 to 251 (FYVK…IWIF), 295 to 315 (AGGV…PFFK), 327 to 347 (IYQG…WIGC), and 354 to 373 (FVTI…AITP).

This sequence belongs to the cytochrome b family. As to quaternary structure, the main subunits of complex b-c1 are: cytochrome b, cytochrome c1 and the Rieske protein. Heme b is required as a cofactor.

The protein localises to the mitochondrion inner membrane. Component of the ubiquinol-cytochrome c reductase complex (complex III or cytochrome b-c1 complex) that is part of the mitochondrial respiratory chain. The b-c1 complex mediates electron transfer from ubiquinol to cytochrome c. Contributes to the generation of a proton gradient across the mitochondrial membrane that is then used for ATP synthesis. The sequence is that of Cytochrome b (MT-CYB) from Oryza sativa subsp. japonica (Rice).